Consider the following 278-residue polypeptide: Hydroxyethylthiazole kinase (278 aa).

M46 contacts substrate. Residues R122 and T168 each coordinate ATP. Residue G195 coordinates substrate.

Belongs to the Thz kinase family. Mg(2+) serves as cofactor.

It carries out the reaction 5-(2-hydroxyethyl)-4-methylthiazole + ATP = 4-methyl-5-(2-phosphooxyethyl)-thiazole + ADP + H(+). It functions in the pathway cofactor biosynthesis; thiamine diphosphate biosynthesis; 4-methyl-5-(2-phosphoethyl)-thiazole from 5-(2-hydroxyethyl)-4-methylthiazole: step 1/1. Catalyzes the phosphorylation of the hydroxyl group of 4-methyl-5-beta-hydroxyethylthiazole (THZ). The protein is Hydroxyethylthiazole kinase of Chloroflexus aggregans (strain MD-66 / DSM 9485).